Reading from the N-terminus, the 147-residue chain is Large ribosomal subunit protein uL13 (147 aa).

It belongs to the universal ribosomal protein uL13 family. As to quaternary structure, part of the 50S ribosomal subunit.

Functionally, this protein is one of the early assembly proteins of the 50S ribosomal subunit, although it is not seen to bind rRNA by itself. It is important during the early stages of 50S assembly. This is Large ribosomal subunit protein uL13 from Mycobacteroides abscessus (strain ATCC 19977 / DSM 44196 / CCUG 20993 / CIP 104536 / JCM 13569 / NCTC 13031 / TMC 1543 / L948) (Mycobacterium abscessus).